The chain runs to 24 residues: Metallothionein (24 aa).

7 residues coordinate Cd(2+): C3, C5, C8, C10, C17, C19, and C22.

This sequence belongs to the metallothionein superfamily. Type 8 family. Post-translationally, contains 4 disulfide bonds.

In terms of biological role, metallothioneins have a high content of cysteine residues that bind various heavy metals. In Neonectria lugdunensis (Aquatic fungus), this protein is Metallothionein.